Consider the following 256-residue polypeptide: Myeloblastin (256 aa).

The N-terminal stretch at M1–A25 is a signal peptide. A propeptide spanning residues A26–E27 is cleaved from the precursor. Residues I28–R248 form the Peptidase S1 domain. A disulfide bond links C56 and C72. Active-site charge relay system residues include H71 and D118. N129 and N174 each carry an N-linked (GlcNAc...) asparagine glycan. Disulfide bonds link C152/C209, C182/C188, and C199/C224. S203 serves as the catalytic Charge relay system. A propeptide spanning residues R249–P256 is cleaved from the precursor.

This sequence belongs to the peptidase S1 family. Elastase subfamily. In terms of assembly, may form dimers. Interacts with CD177; the interaction tethers PRTN3 to the cell surface; the interaction is direct. Interacts with SERPINB1. Interacts with ADGRG3. In terms of tissue distribution, expressed in polymorphonuclear leukocytes (at protein level). Expressed in neutrophils (at protein level). Expressed in differentiating neutrophils.

It localises to the cytoplasmic granule. Its subcellular location is the secreted. The protein resides in the cell membrane. The protein localises to the membrane raft. It carries out the reaction Hydrolysis of proteins, including elastin, by preferential cleavage: -Ala-|-Xaa- &gt; -Val-|-Xaa-.. Inhibited by phenylmethanesulfonyl fluoride (PMSF) and diisopropyl fluorophosphate (DFP). Serine protease that degrades elastin, fibronectin, laminin, vitronectin, and collagen types I, III, and IV (in vitro). By cleaving and activating receptor F2RL1/PAR-2, enhances endothelial cell barrier function and thus vascular integrity during neutrophil transendothelial migration. Plays a role in neutrophil transendothelial migration, probably when associated with CD177. Triggers inflammatory processes in neutrophils by interacting with ADGRG3 upstream of F2RL1/PAR2 activation. The polypeptide is Myeloblastin (PRTN3) (Homo sapiens (Human)).